We begin with the raw amino-acid sequence, 68 residues long: Phylloseptin-SP1 (68 aa).

Residues 1 to 22 form the signal peptide; it reads MAFLKKSLFLVLFLGLVSLSIC. A propeptide spanning residues 23–45 is cleaved from the precursor; it reads EEKERETKEEENEQEDDNREEKR. Leucine amide is present on Leu-67.

As to expression, expressed by the skin glands.

The protein resides in the secreted. In terms of biological role, weak cationic amphipathic alpha-helical antimicrobial peptide with weak activity against Gram-positive and Gram-negative bacteria and fungi. Has been tested against E.coli (MIC&gt;217.69 uM), S.aureus (MIC&gt;217.69 uM), K.pneumoniae (MIC&gt;189.00 uM) and C.albicans (MIC&gt;217.69 uM). Shows a moderate hemolytic activity. This Agalychnis spurrelli (Gliding leaf frog) protein is Phylloseptin-SP1.